The following is a 204-amino-acid chain: Ribosome maturation factor RimP (204 aa).

Positions 176-204 are disordered; the sequence is GNFDESQFDEIEESEGEEADEAEQPPTKH. Acidic residues predominate over residues 181–198; that stretch reads SQFDEIEESEGEEADEAE.

It belongs to the RimP family.

The protein localises to the cytoplasm. Functionally, required for maturation of 30S ribosomal subunits. The protein is Ribosome maturation factor RimP of Cereibacter sphaeroides (strain KD131 / KCTC 12085) (Rhodobacter sphaeroides).